Consider the following 40-residue polypeptide: Large ribosomal subunit protein bL36 (40 aa).

It belongs to the bacterial ribosomal protein bL36 family.

The protein is Large ribosomal subunit protein bL36 of Corynebacterium diphtheriae (strain ATCC 700971 / NCTC 13129 / Biotype gravis).